The chain runs to 522 residues: E3 ubiquitin-protein ligase TRIM65 (522 aa).

Position 2 is an N-acetylalanine (Ala-2). The RING-type zinc-finger motif lies at 13 to 52 (CSICLGRYRDPVTLPCGHSFCGNCIQDSWRSCEKSCPECR). The B box-type zinc finger occupies 92 to 134 (SHSARCLRHGRPLEFFCRTEGLCVCSACTVHDCSHHERALLDV). Residues 141–229 (DQLRARVLVT…QRLTDHLRAL (89 aa)) are a coiled coil. Ser-187 carries the phosphoserine modification. The region spanning 316-509 (APVPSAVCPL…LTLCHQPEAT (194 aa)) is the B30.2/SPRY domain.

Belongs to the TRIM/RBCC family. Homo-multimerizes. Interacts with ARRDC4.

It is found in the cytoplasm. It carries out the reaction S-ubiquitinyl-[E2 ubiquitin-conjugating enzyme]-L-cysteine + [acceptor protein]-L-lysine = [E2 ubiquitin-conjugating enzyme]-L-cysteine + N(6)-ubiquitinyl-[acceptor protein]-L-lysine.. Its pathway is protein modification; protein ubiquitination. Functionally, E3 ubiquitin ligase that plays a role in several processes including innate immnity, autophagy or inflammation. Negatively regulates miRNAs by modulating the ubiquitination and stability of TNRC6A, a protein involved in RNA-mediated gene silencing by both micro-RNAs (miRNAs) and short interfering RNAs. This ubiquitination results in the suppressed expression of miR-138-5p leading to increased autophagy. Upon enteroviral infection, promotes 'Lys-63'-mediated ubiquitination activation of IFIH1/MDA5 leading to innate signaling cascade. Mechanistically, selectively recognizes MDA5 filaments that occur on dsRNAs. Also plays a role in limitation of inflammation through different mechanisms. First, promotes 'Lys-48'-mediated ubiquitination of VCAM1 leading to its degradation and limitation of LPS-induced lung inflammation. In addition, negatively regulates inflammasome activation by promoting 'lys48'-linked ubiquitination of NLRP3 which is critical for the inhibition of NLRP3 inflammasome activation in resting macrophages. This Mus musculus (Mouse) protein is E3 ubiquitin-protein ligase TRIM65 (Trim65).